A 115-amino-acid chain; its full sequence is Large ribosomal subunit protein bL20 (115 aa).

Belongs to the bacterial ribosomal protein bL20 family.

In terms of biological role, binds directly to 23S ribosomal RNA and is necessary for the in vitro assembly process of the 50S ribosomal subunit. It is not involved in the protein synthesizing functions of that subunit. This chain is Large ribosomal subunit protein bL20, found in Prochlorococcus marinus (strain MIT 9313).